The following is a 196-amino-acid chain: Peptidyl-tRNA hydrolase (196 aa).

Y17 is a tRNA binding site. Catalysis depends on H22, which acts as the Proton acceptor. Residues F68, N70, and N116 each contribute to the tRNA site.

It belongs to the PTH family. As to quaternary structure, monomer.

The protein localises to the cytoplasm. The enzyme catalyses an N-acyl-L-alpha-aminoacyl-tRNA + H2O = an N-acyl-L-amino acid + a tRNA + H(+). Functionally, hydrolyzes ribosome-free peptidyl-tRNAs (with 1 or more amino acids incorporated), which drop off the ribosome during protein synthesis, or as a result of ribosome stalling. Its function is as follows. Catalyzes the release of premature peptidyl moieties from peptidyl-tRNA molecules trapped in stalled 50S ribosomal subunits, and thus maintains levels of free tRNAs and 50S ribosomes. The sequence is that of Peptidyl-tRNA hydrolase from Yersinia pestis bv. Antiqua (strain Antiqua).